Consider the following 273-residue polypeptide: Undecaprenyl-diphosphatase (273 aa).

The next 7 helical transmembrane spans lie at 6–26 (SLLIAAILGVVEGLTEFLPVS), 45–65 (AKTFEVVIQLGSILAVVVMFW), 90–110 (LTLIHILLGMIPAVVLGLLFH), 116–136 (LFNPINVMYALVVGGLLLIAA), 190–210 (YAASEFSFLLAVPMMMGATAL), 222–242 (GDIPMFAVGFITAFVVALIAI), and 252–272 (ISFIPFAIYRFIVAAAVYVVF).

It belongs to the UppP family.

Its subcellular location is the cell inner membrane. The catalysed reaction is di-trans,octa-cis-undecaprenyl diphosphate + H2O = di-trans,octa-cis-undecaprenyl phosphate + phosphate + H(+). In terms of biological role, catalyzes the dephosphorylation of undecaprenyl diphosphate (UPP). Confers resistance to bacitracin. The sequence is that of Undecaprenyl-diphosphatase from Escherichia coli O139:H28 (strain E24377A / ETEC).